A 76-amino-acid chain; its full sequence is MQTVLIALLRFYKVAVSPMLGNRCRFYPSCSDYAREAIQYHGAARGTYLAARRICRCHPFSAGGIDLVPPPTSEKR.

Belongs to the UPF0161 family.

The protein localises to the cell inner membrane. Functionally, could be involved in insertion of integral membrane proteins into the membrane. This is Putative membrane protein insertion efficiency factor from Paraburkholderia phytofirmans (strain DSM 17436 / LMG 22146 / PsJN) (Burkholderia phytofirmans).